Here is a 355-residue protein sequence, read N- to C-terminus: Tetraacyldisaccharide 4'-kinase (355 aa).

64-71 (YVGGTGKT) lines the ATP pocket. Residues 206–226 (NRAPQSSATPTAASGQGPRRA) form a disordered region. Residues 208–222 (APQSSATPTAASGQG) are compositionally biased toward low complexity.

It belongs to the LpxK family.

It catalyses the reaction a lipid A disaccharide + ATP = a lipid IVA + ADP + H(+). Its pathway is glycolipid biosynthesis; lipid IV(A) biosynthesis; lipid IV(A) from (3R)-3-hydroxytetradecanoyl-[acyl-carrier-protein] and UDP-N-acetyl-alpha-D-glucosamine: step 6/6. Its function is as follows. Transfers the gamma-phosphate of ATP to the 4'-position of a tetraacyldisaccharide 1-phosphate intermediate (termed DS-1-P) to form tetraacyldisaccharide 1,4'-bis-phosphate (lipid IVA). The sequence is that of Tetraacyldisaccharide 4'-kinase from Bordetella petrii (strain ATCC BAA-461 / DSM 12804 / CCUG 43448).